The chain runs to 70 residues: Large ribosomal subunit protein bL31 (70 aa).

Residues Cys16, Cys18, Cys38, and Cys41 each contribute to the Zn(2+) site.

This sequence belongs to the bacterial ribosomal protein bL31 family. Type A subfamily. As to quaternary structure, part of the 50S ribosomal subunit. The cofactor is Zn(2+).

In terms of biological role, binds the 23S rRNA. This chain is Large ribosomal subunit protein bL31, found in Saccharopolyspora erythraea (strain ATCC 11635 / DSM 40517 / JCM 4748 / NBRC 13426 / NCIMB 8594 / NRRL 2338).